Consider the following 208-residue polypeptide: Large ribosomal subunit protein uL4 (208 aa).

A disordered region spans residues 45–85 (RQGTHKAKTRAQVRGGGRKPYRQKGTGNARQGSTRSPLMIG). A compositionally biased stretch (basic residues) spans 46 to 66 (QGTHKAKTRAQVRGGGRKPYR). Over residues 69–80 (GTGNARQGSTRS) the composition is skewed to polar residues.

The protein belongs to the universal ribosomal protein uL4 family. As to quaternary structure, part of the 50S ribosomal subunit.

In terms of biological role, one of the primary rRNA binding proteins, this protein initially binds near the 5'-end of the 23S rRNA. It is important during the early stages of 50S assembly. It makes multiple contacts with different domains of the 23S rRNA in the assembled 50S subunit and ribosome. Forms part of the polypeptide exit tunnel. This chain is Large ribosomal subunit protein uL4, found in Chlorobium phaeobacteroides (strain DSM 266 / SMG 266 / 2430).